The primary structure comprises 244 residues: ATP synthase subunit a (244 aa).

The next 7 membrane-spanning stretches (helical) occupy residues 20 to 40 (FFDV…VIVI), 81 to 101 (GILF…LNVM), 113 to 133 (QLLV…IWGF), 140 to 160 (FLNI…LVFI), 176 to 196 (LFAN…AAIY), 202 to 222 (FIGI…LGIA), and 223 to 243 (FLQA…IINL).

This sequence belongs to the ATPase A chain family. In terms of assembly, F-type ATPases have 2 components, CF(1) - the catalytic core - and CF(0) - the membrane proton channel. CF(1) has five subunits: alpha(3), beta(3), gamma(1), delta(1), epsilon(1). CF(0) has three main subunits: a, b and c.

Its subcellular location is the mitochondrion inner membrane. Its function is as follows. Mitochondrial membrane ATP synthase (F(1)F(0) ATP synthase or Complex V) produces ATP from ADP in the presence of a proton gradient across the membrane which is generated by electron transport complexes of the respiratory chain. F-type ATPases consist of two structural domains, F(1) - containing the extramembraneous catalytic core and F(0) - containing the membrane proton channel, linked together by a central stalk and a peripheral stalk. During catalysis, ATP synthesis in the catalytic domain of F(1) is coupled via a rotary mechanism of the central stalk subunits to proton translocation. Key component of the proton channel; it may play a direct role in the translocation of protons across the membrane. The polypeptide is ATP synthase subunit a (atp6) (Dictyostelium citrinum (Slime mold)).